The following is a 464-amino-acid chain: Glutamate--tRNA ligase 2 (464 aa).

Positions 11 to 21 (PSPTGFLHIGS) match the 'HIGH' region motif. The short motif at 240–244 (KLSKR) is the 'KMSKS' region element. An ATP-binding site is contributed by lysine 243.

Belongs to the class-I aminoacyl-tRNA synthetase family. Glutamate--tRNA ligase type 1 subfamily. In terms of assembly, monomer.

It is found in the cytoplasm. It carries out the reaction tRNA(Glu) + L-glutamate + ATP = L-glutamyl-tRNA(Glu) + AMP + diphosphate. In terms of biological role, catalyzes the attachment of glutamate to tRNA(Glu) in a two-step reaction: glutamate is first activated by ATP to form Glu-AMP and then transferred to the acceptor end of tRNA(Glu). This Rickettsia bellii (strain OSU 85-389) protein is Glutamate--tRNA ligase 2.